We begin with the raw amino-acid sequence, 122 residues long: UPF0102 protein CTC_01256 (122 aa).

The protein belongs to the UPF0102 family.

The polypeptide is UPF0102 protein CTC_01256 (Clostridium tetani (strain Massachusetts / E88)).